The chain runs to 529 residues: Tyrosinase (529 aa).

The signal sequence occupies residues 1–18 (MLLAVLYCLLWSFQTSAG). The Lumenal, melanosome segment spans residues 19 to 476 (HFPRACVSSK…YLEQASRIWS (458 aa)). Residues asparagine 86, asparagine 111, and asparagine 161 are each glycosylated (N-linked (GlcNAc...) asparagine). Positions 180, 202, and 211 each coordinate Cu cation. Asparagine 230 carries an N-linked (GlcNAc...) asparagine glycan. The segment at 287 to 313 (SLCNGTPEGPLQRNPGNHDKSRTPRLP) is disordered. Residue asparagine 337 is glycosylated (N-linked (GlcNAc...) asparagine). Cu cation is bound by residues histidine 363 and histidine 367. Residue asparagine 371 is glycosylated (N-linked (GlcNAc...) asparagine). Cu cation is bound at residue histidine 390. The helical transmembrane segment at 477–497 (WLLGAAMVGAVLTALLAGLVS) threads the bilayer. At 498–529 (LLCRHKRKQLPEEKQPLLMEKEDYHSLYQSHL) the chain is on the cytoplasmic side.

This sequence belongs to the tyrosinase family. In terms of assembly, forms an OPN3-dependent complex with DCT in response to blue light in melanocytes. It depends on Cu(2+) as a cofactor. In terms of processing, glycosylated.

Its subcellular location is the melanosome membrane. It is found in the melanosome. The enzyme catalyses 2 L-dopa + O2 = 2 L-dopaquinone + 2 H2O. It carries out the reaction L-tyrosine + O2 = L-dopaquinone + H2O. It catalyses the reaction 2 5,6-dihydroxyindole-2-carboxylate + O2 = 2 indole-5,6-quinone-2-carboxylate + 2 H2O. Its function is as follows. This is a copper-containing oxidase that functions in the formation of pigments such as melanins and other polyphenolic compounds. Catalyzes the initial and rate limiting step in the cascade of reactions leading to melanin production from tyrosine. In addition to hydroxylating tyrosine to DOPA (3,4-dihydroxyphenylalanine), also catalyzes the oxidation of DOPA to DOPA-quinone, and possibly the oxidation of DHI (5,6-dihydroxyindole) to indole-5,6 quinone. The polypeptide is Tyrosinase (TYR) (Gorilla gorilla gorilla (Western lowland gorilla)).